A 310-amino-acid polypeptide reads, in one-letter code: Phosphoribosylaminoimidazole-succinocarboxamide synthase (310 aa).

The protein belongs to the SAICAR synthetase family.

It catalyses the reaction 5-amino-1-(5-phospho-D-ribosyl)imidazole-4-carboxylate + L-aspartate + ATP = (2S)-2-[5-amino-1-(5-phospho-beta-D-ribosyl)imidazole-4-carboxamido]succinate + ADP + phosphate + 2 H(+). It functions in the pathway purine metabolism; IMP biosynthesis via de novo pathway; 5-amino-1-(5-phospho-D-ribosyl)imidazole-4-carboxamide from 5-amino-1-(5-phospho-D-ribosyl)imidazole-4-carboxylate: step 1/2. This chain is Phosphoribosylaminoimidazole-succinocarboxamide synthase, found in Xanthomonas oryzae pv. oryzae (strain MAFF 311018).